Consider the following 87-residue polypeptide: Small ribosomal subunit protein bS20 (87 aa).

Belongs to the bacterial ribosomal protein bS20 family.

Binds directly to 16S ribosomal RNA. This Alkaliphilus metalliredigens (strain QYMF) protein is Small ribosomal subunit protein bS20.